The chain runs to 241 residues: General transcription factor IIF subunit 2 (241 aa).

Belongs to the TFIIF beta subunit family. In terms of assembly, heterodimer of an alpha and a beta subunit.

The protein localises to the nucleus. Its function is as follows. TFIIF is a general transcription initiation factor that binds to RNA polymerase II and helps to recruit it to the initiation complex in collaboration with TFIIB. In Dictyostelium discoideum (Social amoeba), this protein is General transcription factor IIF subunit 2 (gtf2f2).